Reading from the N-terminus, the 261-residue chain is Carbonic anhydrase 1 (261 aa).

An N-acetylalanine modification is found at Ala-2. The Alpha-carbonic anhydrase domain occupies 4–261 (PDWGYDGENG…LKGRTVKASF (258 aa)). The disordered stretch occupies residues 22–41 (PIANGNNQSPIDIKTSETKR). The Proton donor/acceptor role is filled by His-65. Zn(2+)-binding residues include His-95, His-97, and His-120. Substrate is bound by residues Thr-200 and 200-201 (TH).

The protein belongs to the alpha-carbonic anhydrase family. Requires Zn(2+) as cofactor.

The protein resides in the cytoplasm. The enzyme catalyses hydrogencarbonate + H(+) = CO2 + H2O. The catalysed reaction is urea = cyanamide + H2O. Inhibited by acetazolamide. Functionally, catalyzes the reversible hydration of carbon dioxide. Can hydrate cyanamide to urea. In Ovis aries (Sheep), this protein is Carbonic anhydrase 1 (CA1).